The following is a 299-amino-acid chain: 4-hydroxybenzoate octaprenyltransferase (299 aa).

8 helical membrane-spanning segments follow: residues 33–53 (VGFL…ADGV), 56–76 (WWTL…GCVI), 107–127 (LLMF…MNQL), 151–171 (LPQV…FAAI), 180–200 (WLLY…YAMV), 213–233 (IAIL…TLML), 247–267 (HTYW…FIIA), and 278–298 (AFMH…LATT).

Belongs to the UbiA prenyltransferase family. Mg(2+) is required as a cofactor.

The protein localises to the cell inner membrane. It catalyses the reaction all-trans-octaprenyl diphosphate + 4-hydroxybenzoate = 4-hydroxy-3-(all-trans-octaprenyl)benzoate + diphosphate. It functions in the pathway cofactor biosynthesis; ubiquinone biosynthesis. Catalyzes the prenylation of para-hydroxybenzoate (PHB) with an all-trans polyprenyl group. Mediates the second step in the final reaction sequence of ubiquinone-8 (UQ-8) biosynthesis, which is the condensation of the polyisoprenoid side chain with PHB, generating the first membrane-bound Q intermediate 3-octaprenyl-4-hydroxybenzoate. The polypeptide is 4-hydroxybenzoate octaprenyltransferase (Xylella fastidiosa (strain M12)).